The following is a 508-amino-acid chain: Mitochondrial distribution and morphology protein 10 (508 aa).

Residues 160-195 (PAHPTSTRPTPPQTPPSHTRQPSEPSTPAPSPTPGN) form a disordered region.

Belongs to the MDM10 family. Component of the ER-mitochondria encounter structure (ERMES) or MDM complex, composed of MMM1, MDM10, MDM12 and MDM34. Associates with the mitochondrial outer membrane sorting assembly machinery SAM(core) complex.

It is found in the mitochondrion outer membrane. Component of the ERMES/MDM complex, which serves as a molecular tether to connect the endoplasmic reticulum and mitochondria. Components of this complex are involved in the control of mitochondrial shape and protein biogenesis and may function in phospholipid exchange. MDM10 is involved in the late assembly steps of the general translocase of the mitochondrial outer membrane (TOM complex). Functions in the TOM40-specific route of the assembly of outer membrane beta-barrel proteins, including the association of TOM40 with the receptor TOM22 and small TOM proteins. Can associate with the SAM(core) complex as well as the MDM12-MMM1 complex, both involved in late steps of the major beta-barrel assembly pathway, that is responsible for biogenesis of all outer membrane beta-barrel proteins. May act as a switch that shuttles between both complexes and channels precursor proteins into the TOM40-specific pathway. Plays a role in mitochondrial morphology and in the inheritance of mitochondria. This chain is Mitochondrial distribution and morphology protein 10, found in Cryptococcus neoformans var. neoformans serotype D (strain JEC21 / ATCC MYA-565) (Filobasidiella neoformans).